The primary structure comprises 251 residues: Glucosamine-6-phosphate deaminase (251 aa).

Aspartate 73 functions as the Proton acceptor; for enolization step in the catalytic mechanism. The For ring-opening step role is filled by asparagine 142. Catalysis depends on histidine 144, which acts as the Proton acceptor; for ring-opening step. The active-site For ring-opening step is the glutamate 149.

This sequence belongs to the glucosamine/galactosamine-6-phosphate isomerase family. NagB subfamily.

The catalysed reaction is alpha-D-glucosamine 6-phosphate + H2O = beta-D-fructose 6-phosphate + NH4(+). It participates in amino-sugar metabolism; N-acetylneuraminate degradation; D-fructose 6-phosphate from N-acetylneuraminate: step 5/5. In terms of biological role, catalyzes the reversible isomerization-deamination of glucosamine 6-phosphate (GlcN6P) to form fructose 6-phosphate (Fru6P) and ammonium ion. In Rhodopirellula baltica (strain DSM 10527 / NCIMB 13988 / SH1), this protein is Glucosamine-6-phosphate deaminase.